We begin with the raw amino-acid sequence, 234 residues long: Phycobilisome rod-core linker polypeptide cpcG (234 aa).

The region spanning 11–191 is the PBS-linker domain; it reads SSQNHRVNSF…PRYGSDFKER (181 aa).

This sequence belongs to the phycobilisome linker protein family. The phycobilisome is a hemidiscoidal structure that is composed of two distinct substructures: a core complex and a number of rods radiating from the core.

It is found in the plastid. Its subcellular location is the chloroplast thylakoid membrane. Rod-core linker protein required for attachment of phycocyanin to allophycocyanin in cores of phycobilisomes. Its function is as follows. Linker polypeptides determine the state of aggregation and the location of the disk-shaped phycobiliprotein units within the phycobilisome and modulate their spectroscopic properties in order to mediate a directed and optimal energy transfer. This Cyanidium caldarium (Red alga) protein is Phycobilisome rod-core linker polypeptide cpcG (cpcG).